We begin with the raw amino-acid sequence, 326 residues long: Porin-like protein H (326 aa).

The first 19 residues, 1 to 19, serve as a signal peptide directing secretion; the sequence is MKKTLVALAILTAAGSANA.

Belongs to the Gram-negative porin family. Oligomer.

The protein resides in the cell outer membrane. In terms of biological role, forms pores that allow passive diffusion of small molecules across the outer membrane. This chain is Porin-like protein H (ompH), found in Photobacterium profundum (strain SS9).